We begin with the raw amino-acid sequence, 200 residues long: Outer-membrane lipoprotein carrier protein (200 aa).

A signal peptide spans 1-18 (MKAVVFAMVMAVSFNVFA).

It belongs to the LolA family. In terms of assembly, monomer.

It localises to the periplasm. Participates in the translocation of lipoproteins from the inner membrane to the outer membrane. Only forms a complex with a lipoprotein if the residue after the N-terminal Cys is not an aspartate (The Asp acts as a targeting signal to indicate that the lipoprotein should stay in the inner membrane). The polypeptide is Outer-membrane lipoprotein carrier protein (Idiomarina loihiensis (strain ATCC BAA-735 / DSM 15497 / L2-TR)).